A 206-amino-acid chain; its full sequence is Small ribosomal subunit protein uS4 (206 aa).

In terms of domain architecture, S4 RNA-binding spans 94-156; sequence RRLDNVVYRL…SRRRMYFKNL (63 aa).

It belongs to the universal ribosomal protein uS4 family. In terms of assembly, part of the 30S ribosomal subunit. Contacts protein S5. The interaction surface between S4 and S5 is involved in control of translational fidelity.

Functionally, one of the primary rRNA binding proteins, it binds directly to 16S rRNA where it nucleates assembly of the body of the 30S subunit. With S5 and S12 plays an important role in translational accuracy. The protein is Small ribosomal subunit protein uS4 of Roseiflexus castenholzii (strain DSM 13941 / HLO8).